A 236-amino-acid polypeptide reads, in one-letter code: Auxin-responsive protein IAA13 (236 aa).

Disordered stretches follow at residues 1–24 (MAGADVDVGTELRLGLPGGGGGAA), 52–93 (EAAA…WPPV), and 105–130 (SVKSKKEEEADKQQQQPAANASGSNS). Positions 12–16 (LRLGL) match the EAR-like (transcriptional repression) motif. The span at 52 to 61 (EAAAGKAEAP) shows a compositional bias: low complexity. The span at 62–81 (AAEKAKRPAEAAAADAEKPP) shows a compositional bias: basic and acidic residues. Positions 117–130 (QQQQPAANASGSNS) are enriched in low complexity. The PB1 domain occupies 131 to 218 (SAFVKVSMDG…SCKRLRIMKG (88 aa)).

It belongs to the Aux/IAA family. In terms of assembly, homodimers and heterodimers.

The protein resides in the nucleus. In terms of biological role, aux/IAA proteins are short-lived transcriptional factors that function as repressors of early auxin response genes at low auxin concentrations. In Oryza sativa subsp. japonica (Rice), this protein is Auxin-responsive protein IAA13 (IAA13).